The primary structure comprises 246 residues: Ribonuclease PH (246 aa).

Phosphate is bound by residues R91 and 129 to 131 (GTR).

It belongs to the RNase PH family. As to quaternary structure, homohexameric ring arranged as a trimer of dimers.

The catalysed reaction is tRNA(n+1) + phosphate = tRNA(n) + a ribonucleoside 5'-diphosphate. Its function is as follows. Phosphorolytic 3'-5' exoribonuclease that plays an important role in tRNA 3'-end maturation. Removes nucleotide residues following the 3'-CCA terminus of tRNAs; can also add nucleotides to the ends of RNA molecules by using nucleoside diphosphates as substrates, but this may not be physiologically important. Probably plays a role in initiation of 16S rRNA degradation (leading to ribosome degradation) during starvation. The protein is Ribonuclease PH of Paraburkholderia phymatum (strain DSM 17167 / CIP 108236 / LMG 21445 / STM815) (Burkholderia phymatum).